Reading from the N-terminus, the 130-residue chain is Phosphoribosyl-AMP cyclohydrolase (130 aa).

D78 lines the Mg(2+) pocket. C79 serves as a coordination point for Zn(2+). Residues D80 and D82 each contribute to the Mg(2+) site. C96 and C103 together coordinate Zn(2+).

It belongs to the PRA-CH family. As to quaternary structure, homodimer. Mg(2+) is required as a cofactor. The cofactor is Zn(2+).

It localises to the cytoplasm. The catalysed reaction is 1-(5-phospho-beta-D-ribosyl)-5'-AMP + H2O = 1-(5-phospho-beta-D-ribosyl)-5-[(5-phospho-beta-D-ribosylamino)methylideneamino]imidazole-4-carboxamide. The protein operates within amino-acid biosynthesis; L-histidine biosynthesis; L-histidine from 5-phospho-alpha-D-ribose 1-diphosphate: step 3/9. In terms of biological role, catalyzes the hydrolysis of the adenine ring of phosphoribosyl-AMP. The chain is Phosphoribosyl-AMP cyclohydrolase from Nitrosospira multiformis (strain ATCC 25196 / NCIMB 11849 / C 71).